Here is a 29-residue protein sequence, read N- to C-terminus: Chassatide C10 (29 aa).

The cyclopeptide (Gly-Asn) cross-link spans 1–29; that stretch reads GEYCGESCYLIPCFTPGCYCVSRQCVNKN. 3 disulfides stabilise this stretch: Cys-4/Cys-18, Cys-8/Cys-20, and Cys-13/Cys-25.

This is a cyclic peptide.

Its function is as follows. Probably participates in a plant defense mechanism. Has no activity against bacteria up to a concentration of 80 uM. Has cytotoxic but no hemolytic activity. This is Chassatide C10 from Chassalia chartacea (Chassalia curviflora).